We begin with the raw amino-acid sequence, 283 residues long: Elongation factor Ts (283 aa).

Residues 80–83 (TDFV) are involved in Mg(2+) ion dislocation from EF-Tu.

Belongs to the EF-Ts family.

It is found in the cytoplasm. Associates with the EF-Tu.GDP complex and induces the exchange of GDP to GTP. It remains bound to the aminoacyl-tRNA.EF-Tu.GTP complex up to the GTP hydrolysis stage on the ribosome. This is Elongation factor Ts from Salmonella agona (strain SL483).